The primary structure comprises 362 residues: Serine/threonine-protein kinase SBK2 (362 aa).

The segment covering 1-11 has biased composition (basic and acidic residues); the sequence is MPGKQSEDKPM. The disordered stretch occupies residues 1–26; that stretch reads MPGKQSEDKPMEVSTVEDGGDEGLGG. The 269-residue stretch at 62–330 folds into the Protein kinase domain; sequence YEEVRPLGQG…IKSYLGQPWK (269 aa). ATP contacts are provided by residues 68-76 and Lys91; that span reads LGQGRFGRV. The Proton acceptor role is filled by Asp183. A disordered region spans residues 329-362; sequence WKQREGEAEELATELREDGWRGGQEAAKGEQPAC.

Belongs to the protein kinase superfamily. Ser/Thr protein kinase family. STKL subfamily.

It catalyses the reaction L-seryl-[protein] + ATP = O-phospho-L-seryl-[protein] + ADP + H(+). The enzyme catalyses L-threonyl-[protein] + ATP = O-phospho-L-threonyl-[protein] + ADP + H(+). This chain is Serine/threonine-protein kinase SBK2 (Sbk2), found in Mus musculus (Mouse).